The sequence spans 419 residues: Tyrosine--tRNA ligase (419 aa).

Residue Tyr34 participates in L-tyrosine binding. The 'HIGH' region motif lies at 39-48; it reads PTADSLHLGH. Tyr169 and Gln173 together coordinate L-tyrosine. Residues 229 to 233 carry the 'KMSKS' region motif; it reads KFGKS. Residue Lys232 participates in ATP binding. Positions 352 to 419 constitute an S4 RNA-binding domain; the sequence is LNIIDLLVTS…KKKYFVLNFK (68 aa).

It belongs to the class-I aminoacyl-tRNA synthetase family. TyrS type 1 subfamily. In terms of assembly, homodimer.

The protein resides in the cytoplasm. It catalyses the reaction tRNA(Tyr) + L-tyrosine + ATP = L-tyrosyl-tRNA(Tyr) + AMP + diphosphate + H(+). In terms of biological role, catalyzes the attachment of tyrosine to tRNA(Tyr) in a two-step reaction: tyrosine is first activated by ATP to form Tyr-AMP and then transferred to the acceptor end of tRNA(Tyr). In Streptococcus agalactiae serotype V (strain ATCC BAA-611 / 2603 V/R), this protein is Tyrosine--tRNA ligase.